The primary structure comprises 492 residues: MSHANPVQFINGQWQAGLGHDVSSSNPARNEVIWQGKTASKDQVNDAVLSARQAFESWANISLEARVAVVTKFAELLAENKDALATTIALETGKPKWETTGEAGAMVAKVAISLKAYNERTGTVENPMPGAKAFIRHKPHGVVAIFGPYNFPGHLPNGHIVPALIAGNTIVFKPSELTPRVAQEMLKLWEQAGLPNGVINLVQGEVETGKALASHKLIDGLFFTGSSNTGHILHEQFAGQPGKILALEMGGNNPLVVKDVSDIDAVVHDIVQSAFVTTGQRCTCARRLFIEANEQGDAILARLIEVTKNLTIGYYDDEAQPFMGSMISEKAALSLVDAQAKLLALGAKSVLDLKHLEVGTGFVSPGIIDVSDIIADIPDEEYFGPLVKLYRYNDFDKAIDEANNTGFGLSAGLLSDSEASYNHFFTRIRAGIVNWNKPITGASSAAPFGGIGASGNHRASAFYAADYCAYPIASVEAEKVSLPETLTPGMKF.

225–230 (GSSNTG) is a binding site for NAD(+). Active-site residues include Glu-248 and Cys-282.

Belongs to the aldehyde dehydrogenase family. AstD subfamily.

It catalyses the reaction N-succinyl-L-glutamate 5-semialdehyde + NAD(+) + H2O = N-succinyl-L-glutamate + NADH + 2 H(+). It participates in amino-acid degradation; L-arginine degradation via AST pathway; L-glutamate and succinate from L-arginine: step 4/5. In terms of biological role, catalyzes the NAD-dependent reduction of succinylglutamate semialdehyde into succinylglutamate. The sequence is that of N-succinylglutamate 5-semialdehyde dehydrogenase from Colwellia psychrerythraea (strain 34H / ATCC BAA-681) (Vibrio psychroerythus).